The following is a 498-amino-acid chain: Probable global transactivator (498 aa).

The region spanning 43-206 (RERRGRPHGG…YAIIHFLRCR (164 aa)) is the Helicase ATP-binding domain. 55-63 (ADDMGLGKT) serves as a coordination point for ATP. The DEAH box signature appears at 157-160 (DEAH). The region spanning 337–493 (ELVQRVLDTP…RTALNYEDIK (157 aa)) is the Helicase C-terminal domain.

Belongs to the SNF2/RAD54 helicase family.

The chain is Probable global transactivator (GTA) from Orgyia pseudotsugata (Douglas-fir tussock moth).